The following is a 637-amino-acid chain: Early transcription factor 70 kDa subunit (637 aa).

In terms of domain architecture, Helicase ATP-binding spans 32 to 185 (RTIIDENRSV…GHIIDLMSEE (154 aa)). 45–52 (HIMGSGKT) serves as a coordination point for ATP. The DEXH box motif lies at 135-138 (DEAH). Residues 327–507 (KFKYFINRIQ…VLPFDIKKLL (181 aa)) enclose the Helicase C-terminal domain.

The protein belongs to the helicase family. VETF subfamily. In terms of assembly, heterodimer of a 70 kDa and a 82 kDa subunit. Part of the early transcription complex composed of ETF, RAP94/OPG109, and the DNA-directed RNA polymerase.

The protein resides in the virion. Acts with RNA polymerase to initiate transcription from early gene promoters. Is recruited by the RPO-associated protein of 94 kDa RAP94/OPG109 to form the early transcription complex, which also contains the core RNA polymerase. ETF heterodimer binds to early gene promoters. In Homo sapiens (Human), this protein is Early transcription factor 70 kDa subunit (OPG118).